Here is a 78-residue protein sequence, read N- to C-terminus: Chondrosarcoma-associated gene 1 protein (78 aa).

An N-terminal signal peptide occupies residues 1-19 (MSATTACWPAFTVLGEARG). Positions 35–78 (KMSRKPRASSPFSNNHPSTPKRFPRQPRREKGPVKEVPGTKGSP) are disordered.

Expressed in chondrosarcoma, melanoma, cartilage and testis, but not in other normal tissues.

It localises to the cytoplasm. Its subcellular location is the cytoskeleton. It is found in the microtubule organizing center. The protein resides in the centrosome. The protein localises to the spindle pole. May play an important role in maintaining centrosome integrity during mitosis. This is Chondrosarcoma-associated gene 1 protein from Homo sapiens (Human).